We begin with the raw amino-acid sequence, 65 residues long: Large ribosomal subunit protein uL29 (65 aa).

It belongs to the universal ribosomal protein uL29 family.

The protein is Large ribosomal subunit protein uL29 of Buchnera aphidicola subsp. Cinara cedri (strain Cc).